The chain runs to 305 residues: Protoheme IX farnesyltransferase 2 (305 aa).

8 consecutive transmembrane segments (helical) span residues 31–51 (VVML…ETWI), 53–73 (WKIL…AAVI), 103–123 (ALVF…LWVN), 125–145 (LTAL…TMYL), 152–172 (NIVI…TAVT), 179–199 (ALLL…ALAI), 231–251 (VLLA…AIYL), and 277–297 (AMKT…VLLV).

This sequence belongs to the UbiA prenyltransferase family. Protoheme IX farnesyltransferase subfamily.

The protein localises to the cell inner membrane. It catalyses the reaction heme b + (2E,6E)-farnesyl diphosphate + H2O = Fe(II)-heme o + diphosphate. It functions in the pathway porphyrin-containing compound metabolism; heme O biosynthesis; heme O from protoheme: step 1/1. In terms of biological role, converts heme B (protoheme IX) to heme O by substitution of the vinyl group on carbon 2 of heme B porphyrin ring with a hydroxyethyl farnesyl side group. The chain is Protoheme IX farnesyltransferase 2 from Pseudoalteromonas atlantica (strain T6c / ATCC BAA-1087).